The sequence spans 248 residues: Adenosylcobinamide-GDP ribazoletransferase (248 aa).

Transmembrane regions (helical) follow at residues 28 to 48 (LFWF…AGYL), 103 to 123 (VGSF…IVLV), 126 to 146 (LAFG…LVQV), 169 to 189 (AGIQ…LLLM), 193 to 213 (MLPS…MSLL), and 225 to 245 (VLGA…VFLA).

This sequence belongs to the CobS family. The cofactor is Mg(2+).

Its subcellular location is the cell inner membrane. It carries out the reaction alpha-ribazole + adenosylcob(III)inamide-GDP = adenosylcob(III)alamin + GMP + H(+). It catalyses the reaction alpha-ribazole 5'-phosphate + adenosylcob(III)inamide-GDP = adenosylcob(III)alamin 5'-phosphate + GMP + H(+). It participates in cofactor biosynthesis; adenosylcobalamin biosynthesis; adenosylcobalamin from cob(II)yrinate a,c-diamide: step 7/7. Functionally, joins adenosylcobinamide-GDP and alpha-ribazole to generate adenosylcobalamin (Ado-cobalamin). Also synthesizes adenosylcobalamin 5'-phosphate from adenosylcobinamide-GDP and alpha-ribazole 5'-phosphate. The polypeptide is Adenosylcobinamide-GDP ribazoletransferase (Chlorobium phaeobacteroides (strain BS1)).